The sequence spans 264 residues: S-adenosylmethionine decarboxylase proenzyme (264 aa).

Catalysis depends on S112, which acts as the Schiff-base intermediate with substrate; via pyruvic acid. S112 is modified (pyruvic acid (Ser); by autocatalysis). Catalysis depends on H117, which acts as the Proton acceptor; for processing activity. Residue C140 is the Proton donor; for catalytic activity of the active site.

The protein belongs to the prokaryotic AdoMetDC family. Type 2 subfamily. Heterooctamer of four alpha and four beta chains arranged as a tetramer of alpha/beta heterodimers. Pyruvate is required as a cofactor. Post-translationally, is synthesized initially as an inactive proenzyme. Formation of the active enzyme involves a self-maturation process in which the active site pyruvoyl group is generated from an internal serine residue via an autocatalytic post-translational modification. Two non-identical subunits are generated from the proenzyme in this reaction, and the pyruvate is formed at the N-terminus of the alpha chain, which is derived from the carboxyl end of the proenzyme. The post-translation cleavage follows an unusual pathway, termed non-hydrolytic serinolysis, in which the side chain hydroxyl group of the serine supplies its oxygen atom to form the C-terminus of the beta chain, while the remainder of the serine residue undergoes an oxidative deamination to produce ammonia and the pyruvoyl group blocking the N-terminus of the alpha chain.

The enzyme catalyses S-adenosyl-L-methionine + H(+) = S-adenosyl 3-(methylsulfanyl)propylamine + CO2. Its pathway is amine and polyamine biosynthesis; S-adenosylmethioninamine biosynthesis; S-adenosylmethioninamine from S-adenosyl-L-methionine: step 1/1. Catalyzes the decarboxylation of S-adenosylmethionine to S-adenosylmethioninamine (dcAdoMet), the propylamine donor required for the synthesis of the polyamines spermine and spermidine from the diamine putrescine. This is S-adenosylmethionine decarboxylase proenzyme from Escherichia coli O127:H6 (strain E2348/69 / EPEC).